Here is a 193-residue protein sequence, read N- to C-terminus: Cbp/p300-interacting transactivator 1 (193 aa).

Disordered stretches follow at residues 1 to 26, 50 to 88, and 106 to 147; these read MPTTSRPALDVKGGTSPAKEDANQEM, VASNGTKASGAPTSSSGSPIGSPTTTPPTKPPSFNLHPA, and GMAA…SPAI. Residues 54 to 73 show a composition bias toward low complexity; sequence GTKASGAPTSSSGSPIGSPT. The short motif at 158 to 167 is the Nuclear export signal element; the sequence is LMSLVVELGL.

Belongs to the CITED family. In terms of assembly, interacts (via C-terminus) with CREBBP. Interacts with EGR2. Homodimer. Binds to RBM14. Interacts (via N-terminus) with HSPA8; the interaction suppresses the association of CITED1 with p300/CBP and SMAD-mediated transcription transactivation. Interacts (via C-terminus) with TOX3 (via HGM box); the interaction increases estrogen-response element (ERE)-dependent transcription and protection against cell death. Interacts with ESR1; the interaction occurs in a estrogen-dependent manner. Interacts (unphosphorylated form preferentially and via C-terminus) with EP300. In terms of processing, phosphorylated. Phosphorylation changes in a cell cycle-dependent manner and reduces its transcriptional coactivator activity. As to expression, expressed only in melanocytes and testis.

The protein localises to the nucleus. It is found in the cytoplasm. In terms of biological role, transcriptional coactivator of the p300/CBP-mediated transcription complex. Enhances SMAD-mediated transcription by strengthening the functional link between the DNA-binding SMAD transcription factors and the p300/CBP transcription coactivator complex. Stimulates estrogen-dependent transactivation activity mediated by estrogen receptors signaling; stabilizes the interaction of estrogen receptor ESR1 and histone acetyltransferase EP300. Positively regulates TGF-beta signaling through its association with the SMAD/p300/CBP-mediated transcriptional coactivator complex. Induces transcription from estrogen-responsive promoters and protection against cell death. Potentiates EGR2-mediated transcriptional activation activity from the ERBB2 promoter. Acts as an inhibitor of osteoblastic mineralization through a cAMP-dependent parathyroid hormone receptor signaling. May play a role in pigmentation of melanocytes. Associates with chromatin to the estrogen-responsive TGF-alpha promoter region in a estrogen-dependent manner. The polypeptide is Cbp/p300-interacting transactivator 1 (CITED1) (Homo sapiens (Human)).